The chain runs to 322 residues: AB hydrolase superfamily protein FGSG_00044 (322 aa).

In terms of domain architecture, AB hydrolase-1 spans 36–319 (RTTPKQPVAI…ITAEVRRIVK (284 aa)).

Belongs to the AB hydrolase superfamily.

It participates in mycotoxin biosynthesis. In terms of biological role, AB hydrolase superfamily protein; part of the gene cluster that mediates the biosynthesis of gramillins A and B, bicyclic lipopeptides that induce cell death in maize leaves but not in wheat leaves. The nonribosomal peptide synthetase GRA1 incorporates respectively a glutamic adic (Glu), a leucine (Leu), a serine (Ser), a hydroxyglutamine (HOGln), a 2-amino decanoic acid, and 2 cysteins (CysB and CysA). The biosynthesis of 2-amino decanoic acid incorporated in gramillins could be initiated by a fatty acid synthase composed of the alpha and beta subunits FGSG_00036 and FGSG_11656. The cytochrome P450 monooxygenase FGSG_15680 could hydroxylate the fatty acid chain. Subsequent oxidation to the ketone by the oxidoreductase FGSG_00048 and transamination by aminotransferase FGSG_00049 could form 2-amino-decanoic acid. On the other hand, FGSG_15680 could also be responsible for the HO-modified glutamine at the gamma-position. Whether hydroxylation occurs on the fully assembled product or on the Gln residue prior to assembly into the gramillins requires further proof. The thioredoxin FGSG_00043 could also be required for the disulfide-bond formation between CysA and CysB. The specific involvement of the remaining proteins from the cluster is more difficult to discern, but could have broader regulatory (FGSG_00040 and FGSG_11657) or enzymatic functions (FGSG_00044 and FGSG_00045). The final C-domain of GRA1 does not possess the expected sequence of a termination CT domain, often implicated in macrocyclization and release of a cyclopeptidein fungal NRPs; and the thioesterase FGSG_00047 may act in concert with the terminal C-domain of GRA1 to catalyze the formation of the macrocyclic anhydride and release of the products. The polypeptide is AB hydrolase superfamily protein FGSG_00044 (Gibberella zeae (strain ATCC MYA-4620 / CBS 123657 / FGSC 9075 / NRRL 31084 / PH-1) (Wheat head blight fungus)).